A 477-amino-acid polypeptide reads, in one-letter code: Acylamidase (477 aa).

Residues Lys-82 and Ser-157 each act as charge relay system in the active site. Ser-181 (acyl-ester intermediate) is an active-site residue.

The protein belongs to the amidase family.

The enzyme catalyses a monocarboxylic acid amide + H2O = a monocarboxylate + NH4(+). It carries out the reaction an anilide + H2O = aniline + a carboxylate + H(+). The catalysed reaction is an N-acyl-L-amino acid + H2O = an L-alpha-amino acid + a carboxylate. It catalyses the reaction an N-acetyl-L-cysteine-S-conjugate + H2O = an S-substituted L-cysteine + acetate. With respect to regulation, amidase activity is completely suppressed by inhibitors of serine proteases (phenylmethylsulfonyl fluoride and diisopropyl fluorophosphate), partially inhibited by copper and mercury ions, but is not affected by inhibitors of aliphatic amidases (acetaldehyde and nitrophenyl disulfides) or by EDTA. Amidase with broad substrate specificity, catalyzing the hydrolysis of a wide range of N-substituted amides, and, to a lesser extent, the hydrolysis of non-substituted amides. Acid para-nitroanilides (4'-nitroacetanilide, Gly-pNA, Ala-pNA, Leu-pNA) are the best substrates for this enzyme. N-substituted acrylamides (isopropyl acrylamide, N,N-dimethyl-aminopropyl acrylamide, and methylene-bis-acrylamide), N-acetyl derivatives of glycine, alanine and leucine, and aliphatic amides (acetamide, acrylamide, isobutyramide, n-butyramide, and valeramide) can also be used as substrates but with less efficiency. This is Acylamidase from Rhodococcus erythropolis (Arthrobacter picolinophilus).